Consider the following 69-residue polypeptide: Defensin-like protein 166 (69 aa).

Residues 1 to 15 (MIIVIIFLVIYFNNQ) form the signal peptide. Disulfide bonds link Cys19-Cys68, Cys24-Cys44, Cys29-Cys62, and Cys33-Cys64.

It belongs to the DEFL family.

The protein localises to the secreted. The chain is Defensin-like protein 166 from Arabidopsis thaliana (Mouse-ear cress).